The chain runs to 412 residues: L-cysteine:1D-myo-inositol 2-amino-2-deoxy-alpha-D-glucopyranoside ligase (412 aa).

A Zn(2+)-binding site is contributed by Cys-44. Residues 44–47, Thr-59, and 82–84 each bind L-cysteinyl-5'-AMP; these read CGIT and NVT. Positions 46-56 match the 'HIGH' region motif; sequence ITPYDATHLGH. A 'ERGGDP' region motif is present at residues 187–192; the sequence is QSGGDP. Trp-227 contributes to the L-cysteinyl-5'-AMP binding site. Cys-231 is a binding site for Zn(2+). 249-251 is a binding site for L-cysteinyl-5'-AMP; the sequence is GSD. His-256 provides a ligand contact to Zn(2+). Ile-283 contacts L-cysteinyl-5'-AMP. The 'KMSKS' region motif lies at 289 to 293; it reads KMSKS.

Belongs to the class-I aminoacyl-tRNA synthetase family. MshC subfamily. As to quaternary structure, monomer. Zn(2+) is required as a cofactor.

The enzyme catalyses 1D-myo-inositol 2-amino-2-deoxy-alpha-D-glucopyranoside + L-cysteine + ATP = 1D-myo-inositol 2-(L-cysteinylamino)-2-deoxy-alpha-D-glucopyranoside + AMP + diphosphate + H(+). Functionally, catalyzes the ATP-dependent condensation of GlcN-Ins and L-cysteine to form L-Cys-GlcN-Ins. The polypeptide is L-cysteine:1D-myo-inositol 2-amino-2-deoxy-alpha-D-glucopyranoside ligase (mshC) (Mycobacterium leprae (strain TN)).